The sequence spans 153 residues: Large ribosomal subunit protein bL9 (153 aa).

The protein belongs to the bacterial ribosomal protein bL9 family.

Its function is as follows. Binds to the 23S rRNA. In Mycoplasma mycoides subsp. mycoides SC (strain CCUG 32753 / NCTC 10114 / PG1), this protein is Large ribosomal subunit protein bL9.